The chain runs to 308 residues: Putative lipid kinase SH2167 (308 aa).

Positions 1–139 constitute a DAGKc domain; it reads MGQKFNHGVL…YDVMKVNGTY (139 aa). ATP-binding positions include Ser44, 74 to 80, and Thr101; that span reads GDGTVNE. Mg(2+)-binding residues include Ser220, Asp223, and Lys225. Residue Glu281 is the Proton acceptor of the active site.

The protein belongs to the diacylglycerol/lipid kinase family. Mg(2+) is required as a cofactor.

May catalyze the ATP-dependent phosphorylation of lipids other than diacylglycerol (DAG). The polypeptide is Putative lipid kinase SH2167 (Staphylococcus haemolyticus (strain JCSC1435)).